Consider the following 323-residue polypeptide: Beta-ketoacyl-[acyl-carrier-protein] synthase III (323 aa).

Residues C113 and H250 contribute to the active site. Residues 251-255 are ACP-binding; that stretch reads QANKR. Residue N280 is part of the active site.

It belongs to the thiolase-like superfamily. FabH family. As to quaternary structure, homodimer.

It is found in the cytoplasm. It carries out the reaction malonyl-[ACP] + acetyl-CoA + H(+) = 3-oxobutanoyl-[ACP] + CO2 + CoA. The protein operates within lipid metabolism; fatty acid biosynthesis. In terms of biological role, catalyzes the condensation reaction of fatty acid synthesis by the addition to an acyl acceptor of two carbons from malonyl-ACP. Catalyzes the first condensation reaction which initiates fatty acid synthesis and may therefore play a role in governing the total rate of fatty acid production. Possesses both acetoacetyl-ACP synthase and acetyl transacylase activities. Its substrate specificity determines the biosynthesis of branched-chain and/or straight-chain of fatty acids. The sequence is that of Beta-ketoacyl-[acyl-carrier-protein] synthase III from Mesorhizobium japonicum (strain LMG 29417 / CECT 9101 / MAFF 303099) (Mesorhizobium loti (strain MAFF 303099)).